The primary structure comprises 428 residues: Type II methyltransferase M.TthHB8I (428 aa).

Residues 407 to 428 (RKGNTERRKHGPYTSPESAGSF) form a disordered region.

It belongs to the N(4)/N(6)-methyltransferase family.

It carries out the reaction a 2'-deoxyadenosine in DNA + S-adenosyl-L-methionine = an N(6)-methyl-2'-deoxyadenosine in DNA + S-adenosyl-L-homocysteine + H(+). A gamma subtype methylase, recognizes the double-stranded sequence 5'-TCGA-3', methylates A-4 on both strands and protects the DNA from cleavage by the TthHB8I endonuclease. In Thermus thermophilus (strain ATCC 27634 / DSM 579 / HB8), this protein is Type II methyltransferase M.TthHB8I.